Consider the following 95-residue polypeptide: Small ubiquitin-related modifier 2 (95 aa).

Residue Lys-11 forms a Glycyl lysine isopeptide (Lys-Gly) (interchain with G-Cter in SUMO) linkage. Residues 16–95 form the Ubiquitin-like domain; it reads DHINLKVAGQ…VFQQQTGGSF (80 aa). Gly-93 participates in a covalent cross-link: Glycyl lysine isopeptide (Gly-Lys) (interchain with K-? in acceptor proteins). The propeptide occupies 94–95; the sequence is SF.

The protein belongs to the ubiquitin family. SUMO subfamily. In terms of assembly, interacts with sae2 and ube2i. Covalently attached to a number of proteins, including top2. Post-translationally, polymeric chains can be formed through Lys-11 cross-linking. In terms of processing, cleavage of precursor form by a sentrin-specific protease is necessary for function.

It localises to the nucleus. Functionally, ubiquitin-like protein that can be covalently attached to proteins as a monomer or as a lysine-linked polymer. Covalent attachment via an isopeptide bond to its substrates requires prior activation by the E1 complex sae1-sae2 and linkage to the E2 enzyme ube2i, and can be promoted by an E3 ligase such as pias1-4. This post-translational modification on lysine residues of proteins plays a crucial role in a number of cellular processes such as nuclear transport, DNA replication and repair, mitosis and signal transduction. Polymeric sumo2 chains are also susceptible to polyubiquitination which functions as a signal for proteasomal degradation of modified proteins. The polypeptide is Small ubiquitin-related modifier 2 (sumo2) (Xenopus tropicalis (Western clawed frog)).